The sequence spans 247 residues: F-box and leucine-rich protein 22 (247 aa).

An F-box domain is found at 6 to 52 (TMHITQLNRECLLHLFSFLDKDSRKSLARTCSQLHDVFEDPALWSLL). Disordered stretches follow at residues 124 to 154 (SPRR…PDHS) and 173 to 247 (GLGS…AFPQ). The segment covering 184-200 (ETPPAPGVSWGPPPPGA) has biased composition (pro residues).

Directly interacts with SKP1 and CUL1. In terms of tissue distribution, enriched in cardiac muscle.

The protein resides in the cytoplasm. It is found in the myofibril. It localises to the sarcomere. The protein localises to the z line. Its pathway is protein modification; protein ubiquitination. Functionally, substrate-recognition component of the SCF (SKP1-CUL1-F-box protein)-type E3 ubiquitin ligase complex. Promotes ubiquitination of sarcomeric proteins alpha-actinin-2 (ACTN2) and filamin-C (FLNC). The sequence is that of F-box and leucine-rich protein 22 (FBXL22) from Homo sapiens (Human).